Consider the following 344-residue polypeptide: Arginine N-succinyltransferase (344 aa).

L125 contacts succinyl-CoA. H229 serves as the catalytic Proton donor.

It belongs to the arginine N-succinyltransferase family.

The enzyme catalyses succinyl-CoA + L-arginine = N(2)-succinyl-L-arginine + CoA + H(+). The protein operates within amino-acid degradation; L-arginine degradation via AST pathway; L-glutamate and succinate from L-arginine: step 1/5. Functionally, catalyzes the transfer of succinyl-CoA to arginine to produce N(2)-succinylarginine. The protein is Arginine N-succinyltransferase of Salmonella arizonae (strain ATCC BAA-731 / CDC346-86 / RSK2980).